The chain runs to 77 residues: Dermatoxin-B1 (77 aa).

The signal sequence occupies residues 1 to 22 (MAFLKKSLFLVLFLGLVPLSLC). Residues 23 to 42 (ESEKREGENEEEQEDDQSEE) constitute a propeptide that is removed on maturation. Residues 24–45 (SEKREGENEEEQEDDQSEEKRS) are disordered. The segment covering 30–40 (ENEEEQEDDQS) has biased composition (acidic residues). Residue Q76 is modified to Glutamine amide.

Belongs to the frog skin active peptide (FSAP) family. Dermatoxin subfamily. In terms of tissue distribution, highest expression in skin and to a lesser extent in brain and intestine.

Its subcellular location is the secreted. The protein resides in the target cell membrane. In terms of biological role, possesses a potent antimicrobial activity against Gram-positive bacteria B.megaterium, C.glutamicum and S.aureus and mollicutes A.laidlawii and S.melliferum. Less active against Gram-negative bacteria B.cepacia, P.aeruginosa, S.typhimurium and S.meliloti. Probably acts by disturbing membrane functions with its amphipathic structure. The polypeptide is Dermatoxin-B1 (Phyllomedusa bicolor (Two-colored leaf frog)).